We begin with the raw amino-acid sequence, 198 residues long: Protein UNCMA_24250 (198 aa).

In terms of domain architecture, AMMECR1 spans 5–194 (EDGTLAVKTA…ETEPGGPVIE (190 aa)).

This chain is Protein UNCMA_24250, found in Methanocella arvoryzae (strain DSM 22066 / NBRC 105507 / MRE50).